We begin with the raw amino-acid sequence, 282 residues long: Phosphatidylglycerol--prolipoprotein diacylglyceryl transferase (282 aa).

The next 3 membrane-spanning stretches (helical) occupy residues 18 to 38 (IQVH…VALA), 56 to 76 (ILWA…IFQW), and 89 to 109 (IWDG…VVIL). Residue Arg-137 coordinates a 1,2-diacyl-sn-glycero-3-phospho-(1'-sn-glycerol). A helical membrane pass occupies residues 237–257 (VIRVSQALSVVLFFGSIGLMI).

Belongs to the Lgt family.

The protein resides in the cell membrane. It carries out the reaction L-cysteinyl-[prolipoprotein] + a 1,2-diacyl-sn-glycero-3-phospho-(1'-sn-glycerol) = an S-1,2-diacyl-sn-glyceryl-L-cysteinyl-[prolipoprotein] + sn-glycerol 1-phosphate + H(+). It functions in the pathway protein modification; lipoprotein biosynthesis (diacylglyceryl transfer). In terms of biological role, catalyzes the transfer of the diacylglyceryl group from phosphatidylglycerol to the sulfhydryl group of the N-terminal cysteine of a prolipoprotein, the first step in the formation of mature lipoproteins. This is Phosphatidylglycerol--prolipoprotein diacylglyceryl transferase from Lactiplantibacillus plantarum (strain ATCC BAA-793 / NCIMB 8826 / WCFS1) (Lactobacillus plantarum).